Consider the following 106-residue polypeptide: uncharacterized protein (106 aa).

This is an uncharacterized protein from Escherichia coli O6:H1 (strain CFT073 / ATCC 700928 / UPEC).